The chain runs to 411 residues: RNA binding protein fox-1 homolog 2 (411 aa).

The interval 16–175 is disordered; that stretch reads TRGTKRESDQ…SETKASPKRL (160 aa). Composition is skewed to polar residues over residues 58–83 and 99–119; these read PVSQ…TPDT and NGLS…QSTE. Over residues 135–165 the composition is skewed to low complexity; sequence SAPATSTANASSTTDGSQTEGQQSQSQNNEN. The 77-residue stretch at 173 to 249 folds into the RRM domain; it reads KRLHVSNIPF…RKIEVNNATA (77 aa).

In terms of assembly, interacts with papd4/gld2.

It is found in the nucleus. Its subcellular location is the cytoplasm. Functionally, RNA-binding protein that regulates alternative splicing events by binding to 5'-UGCAUGU-3' elements. Regulates alternative splicing of tissue-specific exons. The protein is RNA binding protein fox-1 homolog 2 (rbfox2) of Xenopus laevis (African clawed frog).